Consider the following 94-residue polypeptide: Bacterial microcompartment shell protein PduA (94 aa).

The BMC domain occupies 5–89 (ALGMVETKGL…PHTDVEKILP (85 aa)).

This sequence belongs to the bacterial microcompartments protein family. Homohexamer with a central pore of about 5.6 Angstroms in diameter. The hexamers pack against each other in arrays. Interacts with the N-terminus of PduP which targets PduP to the BMC. Modeling suggests PduC, PduD, PduE, PduL and PduP interact with a cleft formed by the C-terminal segments of 2 adjacent PduA subunits (on the BMC luminal side) in the hexamer.

The protein localises to the bacterial microcompartment. It functions in the pathway polyol metabolism; 1,2-propanediol degradation. In terms of biological role, one of the major shell proteins of the bacterial microcompartment (BMC) dedicated to 1,2-propanediol (1,2-PD) degradation. At least one of PduA or PduJ is required for BMC assembly; it must be encoded as the first gene in the pdu operon. Not required for structural integrity of BMCs, it is required to mitigate propionaldehyde toxicity. Controls diffusion of 1,2-PD into and propionaldehyde out of the BMC shell; residue 40 is particularly important for pore permeability. Overexpression of this protein leads to aberrant filaments that extend the length of the cell, cross the cleavage furrow and impair division. The filaments form nanotubes with a hollow center. The isolated BMC shell component protein ratio for J:A:B':B:K:T:U is approximately 15:10:7:6:1:1:2. Edge residues (particularly Lys-26) are important for function and assembly of the BMC, and influence array formation by hexamers. Interaction with PduA allows encapsulation of at least PduP in BMCs. Probably also targets PduD to the BMC. PduA is probably the hub for binding multiple enzymes to the interior of the BMC; modeling suggests PduC, PduD, PduE, PduG, PduL and PduP are targeted to PduA. Functionally, the 1,2-PD-specific bacterial microcompartment (BMC) concentrates low levels of 1,2-PD catabolic enzymes, concentrates volatile reaction intermediates thus enhancing pathway flux and keeps the level of toxic, mutagenic propionaldehyde low. The polypeptide is Bacterial microcompartment shell protein PduA (Salmonella typhimurium (strain LT2 / SGSC1412 / ATCC 700720)).